We begin with the raw amino-acid sequence, 177 residues long: Bifunctional protein PyrR (177 aa).

Positions 99–111 (VVLVDDVLFTGRT) match the PRPP-binding motif.

This sequence belongs to the purine/pyrimidine phosphoribosyltransferase family. PyrR subfamily.

The enzyme catalyses UMP + diphosphate = 5-phospho-alpha-D-ribose 1-diphosphate + uracil. Regulates the transcription of the pyrimidine nucleotide (pyr) operon in response to exogenous pyrimidines. Its function is as follows. Also displays a weak uracil phosphoribosyltransferase activity which is not physiologically significant. The sequence is that of Bifunctional protein PyrR from Geobacter sulfurreducens (strain ATCC 51573 / DSM 12127 / PCA).